Reading from the N-terminus, the 471-residue chain is Cysteine--tRNA ligase (471 aa).

Cysteine 30 serves as a coordination point for Zn(2+). Positions 32–42 match the 'HIGH' region motif; the sequence is PTVYNFAHIGN. 3 residues coordinate Zn(2+): cysteine 212, histidine 237, and glutamate 241. The short motif at 270 to 274 is the 'KMSKS' region element; it reads KMSKS. Lysine 273 contacts ATP.

The protein belongs to the class-I aminoacyl-tRNA synthetase family. As to quaternary structure, monomer. It depends on Zn(2+) as a cofactor.

It is found in the cytoplasm. It carries out the reaction tRNA(Cys) + L-cysteine + ATP = L-cysteinyl-tRNA(Cys) + AMP + diphosphate. In Leptospira interrogans serogroup Icterohaemorrhagiae serovar Lai (strain 56601), this protein is Cysteine--tRNA ligase.